The primary structure comprises 135 residues: Large ribosomal subunit protein uL16c (135 aa).

It belongs to the universal ribosomal protein uL16 family. As to quaternary structure, part of the 50S ribosomal subunit.

It localises to the plastid. The protein resides in the chloroplast. This chain is Large ribosomal subunit protein uL16c, found in Ceratophyllum demersum (Rigid hornwort).